Here is a 156-residue protein sequence, read N- to C-terminus: Aspartate 1-decarboxylase (156 aa).

Serine 29 (schiff-base intermediate with substrate; via pyruvic acid) is an active-site residue. At serine 29 the chain carries Pyruvic acid (Ser). Threonine 61 lines the substrate pocket. The active-site Proton donor is the tyrosine 62. 77–79 (GAA) contacts substrate.

The protein belongs to the PanD family. As to quaternary structure, heterooctamer of four alpha and four beta subunits. It depends on pyruvate as a cofactor. Post-translationally, is synthesized initially as an inactive proenzyme, which is activated by self-cleavage at a specific serine bond to produce a beta-subunit with a hydroxyl group at its C-terminus and an alpha-subunit with a pyruvoyl group at its N-terminus.

It is found in the cytoplasm. The catalysed reaction is L-aspartate + H(+) = beta-alanine + CO2. It participates in cofactor biosynthesis; (R)-pantothenate biosynthesis; beta-alanine from L-aspartate: step 1/1. In terms of biological role, catalyzes the pyruvoyl-dependent decarboxylation of aspartate to produce beta-alanine. The chain is Aspartate 1-decarboxylase from Rhodopirellula baltica (strain DSM 10527 / NCIMB 13988 / SH1).